We begin with the raw amino-acid sequence, 311 residues long: 4-hydroxyproline 2-epimerase (311 aa).

The active-site Proton acceptor is cysteine 89. Substrate is bound by residues 90–91 (GH), histidine 209, and aspartate 233. Cysteine 237 functions as the Proton donor in the catalytic mechanism. 238-239 (GT) serves as a coordination point for substrate.

Belongs to the proline racemase family.

It carries out the reaction trans-4-hydroxy-L-proline = cis-4-hydroxy-D-proline. In terms of biological role, catalyzes the epimerization of trans-4-hydroxy-L-proline (t4LHyp) to cis-4-hydroxy-D-proline (c4DHyp). Is likely involved in a degradation pathway that converts t4LHyp to alpha-ketoglutarate. Displays no proline racemase activity. This Burkholderia ambifaria (strain ATCC BAA-244 / DSM 16087 / CCUG 44356 / LMG 19182 / AMMD) (Burkholderia cepacia (strain AMMD)) protein is 4-hydroxyproline 2-epimerase.